A 161-amino-acid chain; its full sequence is Anthranilate 1,2-dioxygenase small subunit (161 aa).

Belongs to the bacterial ring-hydroxylating dioxygenase beta subunit family. In terms of assembly, part of a multicomponent enzyme system composed of a reductase (AndAa), a ferredoxin (AndAb) and a two-subunit oxygenase component (AndAc and AndAd).

The enzyme catalyses anthranilate + NADH + O2 + 3 H(+) = catechol + NH4(+) + CO2 + NAD(+). The catalysed reaction is anthranilate + NADPH + O2 + 3 H(+) = catechol + NH4(+) + CO2 + NADP(+). Its pathway is aromatic compound metabolism; anthranilate degradation via hydroxylation; catechol from anthranilate: step 1/1. Its function is as follows. Oxygenase component of anthranilate dioxygenase multicomponent enzyme system which catalyzes the incorporation of both atoms of molecular oxygen into anthranilate to form catechol. Can also act on benzoate and salicylate but not on 2-chlorobenzoate or o-toluate. This Burkholderia cepacia (Pseudomonas cepacia) protein is Anthranilate 1,2-dioxygenase small subunit.